The chain runs to 579 residues: Laccase (579 aa).

Positions 1–31 (MTDWSRRRFLQTGAALGIAGTLPQTTTEVSA) form a signal peptide, tat-type signal. In terms of domain architecture, Plastocyanin-like 1 spans 82–214 (WGFDGSYPGP…AGLLGLYSIT (133 aa)). Positions 145, 147, 192, and 194 each coordinate Cu cation. Residues 372-401 (VSDPSTPPEDASADPTSLSLPTPASYDESD) are disordered. The region spanning 423–530 (LNGHVFGDED…NKMMIPFVVE (108 aa)) is the Plastocyanin-like 2 domain. A glycan (N-linked (GlcNAc...) asparagine) is linked at Asn449. Cu cation contacts are provided by His455, His458, His460, His512, Cys513, His514, His518, and Met523. Asn557 carries N-linked (GlcNAc...) asparagine glycosylation.

Belongs to the multicopper oxidase family. Requires Cu(2+) as cofactor. In terms of processing, exported by the Tat system. Post-translationally, glycosylated.

It is found in the secreted. The catalysed reaction is 4 hydroquinone + O2 = 4 benzosemiquinone + 2 H2O. Its activity is regulated as follows. Inhibited by 1 mM NaN(3), 10 mM thiourea, 10 mM 1,10-phenanthroline, 0.1 mM DL-dithiothreitol (DTT) and 1 mM L-cysteine. The inhibition by DTT and L-cysteine is likely caused by reduction of the oxidized substrate and not by inhibition of the enzyme. Functionally, catalyzes the oxidation of a wide variety of organic substrates, including bilirubin, syringaldazine (SGZ), 2,2'-azino-di-(3-ethylbenzothiazoline)-6-sulfonic acid (ABTS) and dimethoxyphenol (DMP). No oxidation of Fe(2+) or guaiacol. This chain is Laccase (lccA), found in Haloferax volcanii (strain ATCC 29605 / DSM 3757 / JCM 8879 / NBRC 14742 / NCIMB 2012 / VKM B-1768 / DS2) (Halobacterium volcanii).